Consider the following 365-residue polypeptide: TD and POZ domain-containing protein 3 (365 aa).

An MATH domain is found at 19–149 (KFCYNWTISN…EDQFTICCKV (131 aa)). The BTB domain maps to 188–250 (TDCCLLVAGH…EMMGFIYTGK (63 aa)).

Belongs to the Tdpoz family.

The chain is TD and POZ domain-containing protein 3 from Mus musculus (Mouse).